Consider the following 104-residue polypeptide: MKQVSDASFEEDVLKADGPNXVDFWAEWCGPCRQXAPALEELATALGDKVTVAKINIDENPQTPSKYGVRGIPTLMIFKDGQVAATKIGALPKTKLFEWVEASV.

In terms of domain architecture, Thioredoxin spans 2–104 (KQVSDASFEE…KLFEWVEASV (103 aa)). Residues Cys-29 and Cys-32 are joined by a disulfide bond.

Belongs to the thioredoxin family.

Participates in various redox reactions through the reversible oxidation of its active center dithiol to a disulfide and catalyzes dithiol-disulfide exchange reactions. The protein is Thioredoxin (trxA) of Rhodospirillum rubrum.